We begin with the raw amino-acid sequence, 380 residues long: Succinate--CoA ligase [ADP-forming] subunit beta (380 aa).

An ATP-grasp domain is found at Lys-9 to Lys-236. Residues Lys-45, Gly-52–Gly-54, Glu-91, Val-94, and Glu-99 each bind ATP. Asn-191 and Asp-205 together coordinate Mg(2+). Residues Asn-256 and Gly-313–Thr-315 each bind substrate.

It belongs to the succinate/malate CoA ligase beta subunit family. As to quaternary structure, heterotetramer of two alpha and two beta subunits. The cofactor is Mg(2+).

It catalyses the reaction succinate + ATP + CoA = succinyl-CoA + ADP + phosphate. The enzyme catalyses GTP + succinate + CoA = succinyl-CoA + GDP + phosphate. It functions in the pathway carbohydrate metabolism; tricarboxylic acid cycle; succinate from succinyl-CoA (ligase route): step 1/1. Functionally, succinyl-CoA synthetase functions in the citric acid cycle (TCA), coupling the hydrolysis of succinyl-CoA to the synthesis of either ATP or GTP and thus represents the only step of substrate-level phosphorylation in the TCA. The beta subunit provides nucleotide specificity of the enzyme and binds the substrate succinate, while the binding sites for coenzyme A and phosphate are found in the alpha subunit. The chain is Succinate--CoA ligase [ADP-forming] subunit beta from Natronomonas pharaonis (strain ATCC 35678 / DSM 2160 / CIP 103997 / JCM 8858 / NBRC 14720 / NCIMB 2260 / Gabara) (Halobacterium pharaonis).